The chain runs to 186 residues: Peptidyl-tRNA hydrolase (186 aa).

Tyr-16 lines the tRNA pocket. His-21 functions as the Proton acceptor in the catalytic mechanism. TRNA contacts are provided by Tyr-60 and Asn-62.

This sequence belongs to the PTH family. Monomer.

Its subcellular location is the cytoplasm. The enzyme catalyses an N-acyl-L-alpha-aminoacyl-tRNA + H2O = an N-acyl-L-amino acid + a tRNA + H(+). Functionally, hydrolyzes ribosome-free peptidyl-tRNAs (with 1 or more amino acids incorporated), which drop off the ribosome during protein synthesis, or as a result of ribosome stalling. Its function is as follows. Catalyzes the release of premature peptidyl moieties from peptidyl-tRNA molecules trapped in stalled 50S ribosomal subunits, and thus maintains levels of free tRNAs and 50S ribosomes. This is Peptidyl-tRNA hydrolase from Tropheryma whipplei (strain TW08/27) (Whipple's bacillus).